The following is a 506-amino-acid chain: DEAD-box ATP-dependent RNA helicase CshA (506 aa).

The Q motif motif lies at 2–30 (QNFKELGISDNTVQSLESMGFKEPTPIQK). The 171-residue stretch at 33–203 (IPYALQGIDI…QQFMKSPKII (171 aa)) folds into the Helicase ATP-binding domain. An ATP-binding site is contributed by 46–53 (AQTGTGKT). The DEAD box signature appears at 150-153 (DEAD). In terms of domain architecture, Helicase C-terminal spans 214-375 (QIEEFYTIVK…LRPPHRKEVL (162 aa)). The interval 436–506 (EKPLSRKGRN…KGRTFADHQK (71 aa)) is disordered. The segment covering 468–480 (KRSKGYSSKKKST) has biased composition (basic residues).

The protein belongs to the DEAD box helicase family. CshA subfamily. As to quaternary structure, oligomerizes, may be a member of the RNA degradosome.

It localises to the cytoplasm. It catalyses the reaction ATP + H2O = ADP + phosphate + H(+). Its function is as follows. DEAD-box RNA helicase possibly involved in RNA degradation. Unwinds dsRNA in both 5'- and 3'-directions, has RNA-dependent ATPase activity. The protein is DEAD-box ATP-dependent RNA helicase CshA of Staphylococcus aureus (strain MW2).